Consider the following 110-residue polypeptide: Large ribosomal subunit protein uL22 (110 aa).

It belongs to the universal ribosomal protein uL22 family. As to quaternary structure, part of the 50S ribosomal subunit.

This protein binds specifically to 23S rRNA; its binding is stimulated by other ribosomal proteins, e.g. L4, L17, and L20. It is important during the early stages of 50S assembly. It makes multiple contacts with different domains of the 23S rRNA in the assembled 50S subunit and ribosome. Its function is as follows. The globular domain of the protein is located near the polypeptide exit tunnel on the outside of the subunit, while an extended beta-hairpin is found that lines the wall of the exit tunnel in the center of the 70S ribosome. The protein is Large ribosomal subunit protein uL22 of Mycoplasma mobile (strain ATCC 43663 / 163K / NCTC 11711) (Mesomycoplasma mobile).